The sequence spans 249 residues: Ribosomal RNA small subunit methyltransferase J (249 aa).

S-adenosyl-L-methionine is bound by residues 101-102 (RD), 117-118 (ER), and aspartate 171.

Belongs to the methyltransferase superfamily. RsmJ family.

The protein resides in the cytoplasm. It catalyses the reaction guanosine(1516) in 16S rRNA + S-adenosyl-L-methionine = N(2)-methylguanosine(1516) in 16S rRNA + S-adenosyl-L-homocysteine + H(+). Its function is as follows. Specifically methylates the guanosine in position 1516 of 16S rRNA. The protein is Ribosomal RNA small subunit methyltransferase J of Tolumonas auensis (strain DSM 9187 / NBRC 110442 / TA 4).